The chain runs to 125 residues: 14 kDa phosphohistidine phosphatase (125 aa).

At Ala2 the chain carries N-acetylalanine. Position 21 (Lys21) interacts with substrate. The Proton acceptor role is filled by His53. 94–96 serves as a coordination point for substrate; it reads SMG.

Monomer.

The protein localises to the cytoplasm. It carries out the reaction N(pros)-phospho-L-histidyl-[protein] + H2O = L-histidyl-[protein] + phosphate. The enzyme catalyses N(tele)-phospho-L-histidyl-[protein] + H2O = L-histidyl-[protein] + phosphate. Its function is as follows. Exhibits phosphohistidine phosphatase activity. In terms of biological role, may have a significant involvement in neuronal signaling. In Oryctolagus cuniculus (Rabbit), this protein is 14 kDa phosphohistidine phosphatase (PHPT1).